Reading from the N-terminus, the 216-residue chain is Endo-1,4-beta-xylanase 2 (216 aa).

The N-terminal stretch at Met-1–Arg-27 is a signal peptide. Residues Ala-28–Ser-216 form the GH11 domain. Asn-87 carries N-linked (GlcNAc...) asparagine glycosylation. Residue Glu-112 is the Nucleophile of the active site. Catalysis depends on Glu-203, which acts as the Proton donor.

It belongs to the glycosyl hydrolase 11 (cellulase G) family.

It is found in the secreted. It catalyses the reaction Endohydrolysis of (1-&gt;4)-beta-D-xylosidic linkages in xylans.. The protein operates within glycan degradation; xylan degradation. Its function is as follows. Endo-1,4-beta-xylanase involved in the hydrolysis of xylan, a major structural heterogeneous polysaccharide found in plant biomass representing the second most abundant polysaccharide in the biosphere, after cellulose. The chain is Endo-1,4-beta-xylanase 2 (xyn2) from Rhizopus oryzae (Mucormycosis agent).